Consider the following 182-residue polypeptide: NADH-dependent FAD reductase (182 aa).

Aspartate 16 lines the NAD(+) pocket. FAD is bound by residues 47–48 (NS), 62–64 (CVG), and histidine 98. Histidine 143 is an NAD(+) binding site.

This sequence belongs to the non-flavoprotein flavin reductase family. In terms of assembly, homodimer.

The catalysed reaction is FADH2 + NAD(+) = FAD + NADH + 2 H(+). It functions in the pathway antibiotic biosynthesis. Its activity is regulated as follows. The SgcE6-SgcC hydroxylation activity decreases in the presence of excess FAD. Reductase component of a two-component system involved in the biosynthesis of the enediyne antitumor antibiotic C-1027. SgcE6 provides the FADH(2) required by both the halogenase SgcC3 and the monooxygenase SgcC through free diffusion. Accepts only NADH and FAD as substrates. This chain is NADH-dependent FAD reductase, found in Streptomyces globisporus.